The chain runs to 1038 residues: Bone morphogenetic protein receptor type-2 (1038 aa).

A signal peptide spans 1 to 26; sequence MTSSLQRPWRVPWLPWTILLVSTAAA. Residues 27-150 lie on the Extracellular side of the membrane; sequence SQNQERLCAF…PPHSFNRDET (124 aa). Cystine bridges form between cysteine 34-cysteine 66, cysteine 60-cysteine 84, cysteine 94-cysteine 117, cysteine 99-cysteine 116, and cysteine 118-cysteine 123. Asparagine 55 carries N-linked (GlcNAc...) asparagine glycosylation. A glycan (N-linked (GlcNAc...) asparagine) is linked at asparagine 110. Residue asparagine 126 is glycosylated (N-linked (GlcNAc...) asparagine). The helical transmembrane segment at 151 to 171 threads the bilayer; sequence IIIALASVSVLAVLIVALCFG. Topologically, residues 172–1038 are cytoplasmic; the sequence is YRMLTGDRKQ…VSKDIGMNCL (867 aa). The region spanning 203–504 is the Protein kinase domain; it reads LKLLELIGRG…QCAEERMAEL (302 aa). ATP-binding positions include 209 to 217, lysine 230, and 280 to 282; these read IGRGRYGAV and EYY. Aspartate 333 serves as the catalytic Proton acceptor. Residues 337-338 and aspartate 351 contribute to the ATP site; that span reads RN. Residue threonine 379 is modified to Phosphothreonine. Position 586 is a phosphoserine (serine 586). Residues 593–626 form a disordered region; that stretch reads QAQARIPSPETSVTSLSTNTTTTNTTGLTPSTGM. Residues 603–626 show a composition bias toward low complexity; it reads TSVTSLSTNTTTTNTTGLTPSTGM. Serine 680 and serine 681 each carry phosphoserine. Disordered regions lie at residues 746–770 and 872–972; these read PKQQ…KEPR and RREQ…EKIK. Over residues 872-896 the composition is skewed to basic and acidic residues; it reads RREQQAGHDEGVLDRLVDRRERPLE. Residues 937–964 are compositionally biased toward polar residues; it reads RPNSLDLSATNVLDGSSIQIGESTQDGK.

This sequence belongs to the protein kinase superfamily. TKL Ser/Thr protein kinase family. TGFB receptor subfamily. Interacts with GDF5. Interacts with BMP4. Interacts with SCUBE3. Interacts with TSC22D1/TSC-22. Interacts with activin A/INHBA. Requires Mg(2+) as cofactor. It depends on Mn(2+) as a cofactor. As to expression, highly expressed in heart and liver.

It localises to the cell membrane. It catalyses the reaction L-threonyl-[receptor-protein] + ATP = O-phospho-L-threonyl-[receptor-protein] + ADP + H(+). It carries out the reaction L-seryl-[receptor-protein] + ATP = O-phospho-L-seryl-[receptor-protein] + ADP + H(+). Its function is as follows. On ligand binding, forms a receptor complex consisting of two type II and two type I transmembrane serine/threonine kinases. Type II receptors phosphorylate and activate type I receptors which autophosphorylate, then bind and activate SMAD transcriptional regulators. Can also mediate signaling through the activation of the p38MAPK cascade. Binds to BMP7, BMP2 and, less efficiently, BMP4. Binding is weak but enhanced by the presence of type I receptors for BMPs. Mediates induction of adipogenesis by GDF6. Promotes signaling also by binding to activin A/INHBA. This chain is Bone morphogenetic protein receptor type-2 (BMPR2), found in Homo sapiens (Human).